Reading from the N-terminus, the 139-residue chain is Endoribonuclease YbeY (139 aa).

3 residues coordinate Zn(2+): His-99, His-103, and His-109.

Belongs to the endoribonuclease YbeY family. Zn(2+) is required as a cofactor.

Its subcellular location is the cytoplasm. In terms of biological role, single strand-specific metallo-endoribonuclease involved in late-stage 70S ribosome quality control and in maturation of the 3' terminus of the 16S rRNA. In Sulfurimonas denitrificans (strain ATCC 33889 / DSM 1251) (Thiomicrospira denitrificans (strain ATCC 33889 / DSM 1251)), this protein is Endoribonuclease YbeY.